A 69-amino-acid polypeptide reads, in one-letter code: Probable cold shock protein y4cH (69 aa).

Residues 5–65 (GTVKWFNATK…DRKSGKMSAD (61 aa)) form the CSD domain.

It localises to the cytoplasm. The chain is Probable cold shock protein y4cH from Sinorhizobium fredii (strain NBRC 101917 / NGR234).